The sequence spans 66 residues: Trypsin inhibitor (66 aa).

Cystine bridges form between cysteine 5–cysteine 28, cysteine 16–cysteine 44, cysteine 19–cysteine 58, cysteine 21–cysteine 38, and cysteine 43–cysteine 64.

It is found in the secreted. The protein is Trypsin inhibitor of Ascaris suum (Pig roundworm).